The chain runs to 693 residues: Glycine--tRNA ligase beta subunit (693 aa).

Over residues 65 to 74 (QPDKSVEKRG) the composition is skewed to basic and acidic residues. The disordered stretch occupies residues 65–84 (QPDKSVEKRGPAVKAAFDDS).

Belongs to the class-II aminoacyl-tRNA synthetase family. Tetramer of two alpha and two beta subunits.

The protein resides in the cytoplasm. It carries out the reaction tRNA(Gly) + glycine + ATP = glycyl-tRNA(Gly) + AMP + diphosphate. In Marinobacter nauticus (strain ATCC 700491 / DSM 11845 / VT8) (Marinobacter aquaeolei), this protein is Glycine--tRNA ligase beta subunit.